A 157-amino-acid chain; its full sequence is MARLLPALLLLLLPGNVTGNGSGNGSLSRCPPGQFRCSEPPGAHGECYPQDWLCDGHPDCDDGRDEWGCGTSATPAVPTDNGTEAPTVPAPGRALPARNHGRMWMLITAVLLCCLVAVGGIAAWGKSKAKSRSDIFSLASASKELLVPDKSQADLFS.

An N-terminal signal peptide occupies residues 1–19 (MARLLPALLLLLLPGNVTG). Asn-20 and Asn-24 each carry an N-linked (GlcNAc...) asparagine glycan. Residues 20 to 102 (NGSGNGSLSR…RALPARNHGR (83 aa)) lie on the Extracellular side of the membrane. The LDL-receptor class A domain maps to 28 to 71 (SRCPPGQFRCSEPPGAHGECYPQDWLCDGHPDCDDGRDEWGCGT). Intrachain disulfides connect Cys-30/Cys-47, Cys-37/Cys-60, and Cys-54/Cys-69. Residue Asn-81 is glycosylated (N-linked (GlcNAc...) asparagine). A helical transmembrane segment spans residues 103–125 (MWMLITAVLLCCLVAVGGIAAWG). At 126 to 157 (KSKAKSRSDIFSLASASKELLVPDKSQADLFS) the chain is on the cytoplasmic side.

In terms of assembly, (Microbial infection) Interacts with Rous sarcoma virus envelope protein; this interaction allows the viral attachment.

It localises to the membrane. Functionally, responsible for susceptibility to the retrovirus subgroup A Rous sarcoma virus. The protein is Subgroup A Rous sarcoma virus receptor pg950 of Coturnix japonica (Japanese quail).